Reading from the N-terminus, the 505-residue chain is MVLPRFYAASSRAALQAARRAVPFTGVRGYAAAASSQGKVRAVIGAIVDVQFEQGQLPAILNALEIDTPEGKLVLEVAQHLGENTVRTIAMDGTEGLVRGENVSDTGAPISVPVGRETLGRIINVIGEPIDERGPINSKMRKPIHADPPLFVEQSTAAEVLETGIKVVDLLAPYARGGKIGLFGGAGVGKTVFIQELINNIAKAHGGFSVFTGVGERTREGNDLYREMKETGVINLEGDSKVALVFGQMNEPPGARARVALTGLTIAEYFRDEEGQDVLLFIDNIFRFTQAGSEVSALLGRIPSAVGYQPTLATDMGLLQERITTTKKGSVTSVQAVYVPADDLTDPAPATTFAHLDATTVLSRGISELGIYPAVDPLDSKSRLLDAAVVGQEHYDVATQVQQTLQAYKSLQDIIAILGMDELSEQDKLTVERARKIQRFLSQPFAVAEVFTGIPGRLVRLKDTISSFKAVLDGKYDHLPENAFYMVGGIEDVVAKAEKLAAEAN.

An ATP-binding site is contributed by 184-191 (GGAGVGKT).

The protein belongs to the ATPase alpha/beta chains family. In terms of assembly, F-type ATPases have 2 components, CF(1) - the catalytic core - and CF(0) - the membrane proton channel. CF(1) has five subunits: alpha(3), beta(3), gamma(1), delta(1), epsilon(1). CF(0) has three main subunits: a, b and c.

The protein resides in the mitochondrion. The protein localises to the mitochondrion inner membrane. It catalyses the reaction ATP + H2O + 4 H(+)(in) = ADP + phosphate + 5 H(+)(out). Its function is as follows. Mitochondrial membrane ATP synthase (F(1)F(0) ATP synthase or Complex V) produces ATP from ADP in the presence of a proton gradient across the membrane which is generated by electron transport complexes of the respiratory chain. F-type ATPases consist of two structural domains, F(1) - containing the extramembraneous catalytic core, and F(0) - containing the membrane proton channel, linked together by a central stalk and a peripheral stalk. During catalysis, ATP synthesis in the catalytic domain of F(1) is coupled via a rotary mechanism of the central stalk subunits to proton translocation. Subunits alpha and beta form the catalytic core in F(1). Rotation of the central stalk against the surrounding alpha(3)beta(3) subunits leads to hydrolysis of ATP in three separate catalytic sites on the beta subunits. This Kluyveromyces lactis (strain ATCC 8585 / CBS 2359 / DSM 70799 / NBRC 1267 / NRRL Y-1140 / WM37) (Yeast) protein is ATP synthase subunit beta, mitochondrial (ATP2).